Reading from the N-terminus, the 264-residue chain is 3-methyl-2-oxobutanoate hydroxymethyltransferase (264 aa).

2 residues coordinate Mg(2+): Asp-45 and Asp-84. 3-methyl-2-oxobutanoate contacts are provided by residues 45–46, Asp-84, and Lys-113; that span reads DS. Glu-115 is a binding site for Mg(2+). The active-site Proton acceptor is Glu-182.

It belongs to the PanB family. In terms of assembly, homodecamer; pentamer of dimers. The cofactor is Mg(2+).

It is found in the cytoplasm. The enzyme catalyses 3-methyl-2-oxobutanoate + (6R)-5,10-methylene-5,6,7,8-tetrahydrofolate + H2O = 2-dehydropantoate + (6S)-5,6,7,8-tetrahydrofolate. It functions in the pathway cofactor biosynthesis; (R)-pantothenate biosynthesis; (R)-pantoate from 3-methyl-2-oxobutanoate: step 1/2. Catalyzes the reversible reaction in which hydroxymethyl group from 5,10-methylenetetrahydrofolate is transferred onto alpha-ketoisovalerate to form ketopantoate. This chain is 3-methyl-2-oxobutanoate hydroxymethyltransferase, found in Helicobacter hepaticus (strain ATCC 51449 / 3B1).